Reading from the N-terminus, the 157-residue chain is SsrA-binding protein (157 aa).

It belongs to the SmpB family.

It localises to the cytoplasm. In terms of biological role, required for rescue of stalled ribosomes mediated by trans-translation. Binds to transfer-messenger RNA (tmRNA), required for stable association of tmRNA with ribosomes. tmRNA and SmpB together mimic tRNA shape, replacing the anticodon stem-loop with SmpB. tmRNA is encoded by the ssrA gene; the 2 termini fold to resemble tRNA(Ala) and it encodes a 'tag peptide', a short internal open reading frame. During trans-translation Ala-aminoacylated tmRNA acts like a tRNA, entering the A-site of stalled ribosomes, displacing the stalled mRNA. The ribosome then switches to translate the ORF on the tmRNA; the nascent peptide is terminated with the 'tag peptide' encoded by the tmRNA and targeted for degradation. The ribosome is freed to recommence translation, which seems to be the essential function of trans-translation. The protein is SsrA-binding protein of Christiangramia forsetii (strain DSM 17595 / CGMCC 1.15422 / KT0803) (Gramella forsetii).